A 1032-amino-acid polypeptide reads, in one-letter code: Phosphoenolpyruvate carboxylase 4 (1032 aa).

His154 is a catalytic residue. Residues 377 to 407 form a disordered region; sequence PNLQKQNEQDFSESDWEKIDNGSRSGLTSRG. Residues 398–407 are compositionally biased toward polar residues; sequence GSRSGLTSRG. Lys699 is an active-site residue.

This sequence belongs to the PEPCase type 1 family. In terms of assembly, homotetramer. Mg(2+) is required as a cofactor. In terms of tissue distribution, expressed at low levels in flowers and siliques, and detectable in roots.

It localises to the cytoplasm. It carries out the reaction oxaloacetate + phosphate = phosphoenolpyruvate + hydrogencarbonate. In terms of biological role, through the carboxylation of phosphoenolpyruvate (PEP) it forms oxaloacetate, a four-carbon dicarboxylic acid source for the tricarboxylic acid cycle. The polypeptide is Phosphoenolpyruvate carboxylase 4 (PPC4) (Arabidopsis thaliana (Mouse-ear cress)).